The sequence spans 970 residues: Protein tweety (970 aa).

At 1 to 47 (MGDYHEFTDQYKVPVIAKLLHALPHYNITFHKINSTFRPNDEIYLES) the chain is on the extracellular side. Residues asparagine 27 and asparagine 34 are each glycosylated (N-linked (GlcNAc...) asparagine). Residues 48-68 (LGILGSVPAALLIVSLLGLLF) form a helical membrane-spanning segment. At 69–89 (YLMTRCCDRKPRPAHSITSLK) the chain is on the cytoplasmic side. Residues 90-110 (VALSIVTVMCCAAIGLGLYGN) traverse the membrane as a helical segment. At 111 to 219 (DDLHNGLLEV…GDQWELIRWP (109 aa)) the chain is on the extracellular side. Residues asparagine 136, asparagine 166, and asparagine 183 are each glycosylated (N-linked (GlcNAc...) asparagine). Residues 220-240 (GTVATLALLLVLCAVLLVGVA) form a helical membrane-spanning segment. At 241–246 (RHSRCA) the chain is on the cytoplasmic side. A helical membrane pass occupies residues 247–267 (LILFSVCGLLAVTGSWLMSGL). Topologically, residues 268–395 (YLSSSVAVGD…RGLCEGGLLG (128 aa)) are extracellular. N-linked (GlcNAc...) asparagine glycosylation is present at asparagine 359. Residues 396–416 (LVLMLIASFIAAILLTIMVWV) form a helical membrane-spanning segment. At 417–970 (DSHTWIYIRK…DESNYAVTEL (554 aa)) the chain is on the cytoplasmic side. Residues 532-571 (NAAANMPPTTQAAQQQQQQQAQQQQQQAQQQLGGPQPIYC) show a composition bias toward low complexity. Disordered stretches follow at residues 532 to 587 (NAAA…QHPH), 677 to 763 (RQNS…NESD), and 849 to 970 (MKAI…VTEL). The span at 572–587 (HHPHQHPHPHPHQHPH) shows a compositional bias: basic residues. Composition is skewed to low complexity over residues 689–700 (HQHPPSLHQQQQ), 707–737 (QQQQ…QQHH), and 745–759 (QHQQ…QQQP). A compositionally biased stretch (pro residues) spans 852–868 (IPPPRIGTPTSPPPPVA). Composition is skewed to gly residues over residues 883–894 (QNGGAVVGGGGA) and 931–945 (NGGG…GGGA). The span at 961 to 970 (DESNYAVTEL) shows a compositional bias: polar residues.

Belongs to the tweety family.

It localises to the cell membrane. In terms of biological role, non-essential protein that probably acts as a chloride channel. This chain is Protein tweety (tty), found in Drosophila melanogaster (Fruit fly).